The chain runs to 459 residues: Cysteine--tRNA ligase (459 aa).

Cys-28 lines the Zn(2+) pocket. A 'HIGH' region motif is present at residues 30-40; sequence VTIYDLCHIGH. Residues Cys-209, His-234, and Glu-238 each contribute to the Zn(2+) site. The 'KMSKS' region motif lies at 266–270; that stretch reads KMSKS. Lys-269 contributes to the ATP binding site.

The protein belongs to the class-I aminoacyl-tRNA synthetase family. In terms of assembly, monomer. Requires Zn(2+) as cofactor.

The protein localises to the cytoplasm. The catalysed reaction is tRNA(Cys) + L-cysteine + ATP = L-cysteinyl-tRNA(Cys) + AMP + diphosphate. The chain is Cysteine--tRNA ligase from Shewanella baltica (strain OS185).